The following is a 536-amino-acid chain: Probable serine/threonine-protein kinase DDB_G0268550 (536 aa).

Positions 14–305 (EIIEKNYRKG…IDVLEIHPFL (292 aa)) constitute a Protein kinase domain. Residues 20–28 (YRKGGFSKI) and Lys-51 contribute to the ATP site. Asp-147 acts as the Proton acceptor in catalysis. A disordered region spans residues 161 to 192 (DNNNNNNNNNNNNNNNNNNNSNINDDNNNSNS).

It belongs to the protein kinase superfamily. Ser/Thr protein kinase family. Mg(2+) is required as a cofactor.

The enzyme catalyses L-seryl-[protein] + ATP = O-phospho-L-seryl-[protein] + ADP + H(+). It carries out the reaction L-threonyl-[protein] + ATP = O-phospho-L-threonyl-[protein] + ADP + H(+). The polypeptide is Probable serine/threonine-protein kinase DDB_G0268550 (Dictyostelium discoideum (Social amoeba)).